The primary structure comprises 104 residues: Thioredoxin (104 aa).

Positions Ala-2 to Leu-104 constitute a Thioredoxin domain. Residues Cys-29 and Cys-32 are joined by a disulfide bond.

It belongs to the thioredoxin family.

Component of the thioredoxin-thioredoxin reductase system. Participates in various redox reactions through the reversible oxidation of its active center dithiol to a disulfide and catalyzes dithiol-disulfide exchange reactions. This Staphylococcus saprophyticus subsp. saprophyticus (strain ATCC 15305 / DSM 20229 / NCIMB 8711 / NCTC 7292 / S-41) protein is Thioredoxin (trxA).